A 411-amino-acid chain; its full sequence is C6 finger domain transcription factor hasA (411 aa).

Residues 1–17 show a composition bias toward polar residues; the sequence is MTSTLPYLTSPPATHPS. Residues 1–21 form a disordered region; it reads MTSTLPYLTSPPATHPSNSDH. Positions 28–54 form a DNA-binding region, zn(2)-C6 fungal-type; it reads CDSCHQCKVKCSGGSPCFRCTSKGLNC.

It localises to the nucleus. Transcription factor; part of the gene cluster that mediates the biosynthesis of hexadehydro-astechrome (HAS), a tryptophan-derived iron(III)-complex that acts as a virulence factor in infected mice. Positively regulates the expression of the HAS biosynthetic genes. This is C6 finger domain transcription factor hasA from Aspergillus fumigatus (strain CBS 144.89 / FGSC A1163 / CEA10) (Neosartorya fumigata).